The following is a 685-amino-acid chain: Tyrosinase (685 aa).

Serine 2 is modified (N-acetylserine). Positions 67, 97, 106, 278, 282, and 307 each coordinate Cu cation. The 2'-(S-cysteinyl)-histidine (Cys-His) cross-link spans 95–97 (CTH). The propeptide at 409 to 685 (ANFVENVADR…PCGHGPEDHI (277 aa)) is could be involved in enzyme activation.

It belongs to the tyrosinase family. Requires Cu(2+) as cofactor.

It carries out the reaction 2 L-dopa + O2 = 2 L-dopaquinone + 2 H2O. It catalyses the reaction L-tyrosine + O2 = L-dopaquinone + H2O. In terms of biological role, this is a copper-containing oxidase that functions in the formation of pigments such as melanins and other polyphenolic compounds. The protein is Tyrosinase (T) of Neurospora crassa (strain ATCC 24698 / 74-OR23-1A / CBS 708.71 / DSM 1257 / FGSC 987).